The sequence spans 231 residues: Putative transglycosylase H16_A0665 (231 aa).

A helical transmembrane segment spans residues Phe-8–Leu-28.

The protein belongs to the glycosyltransferase 51 family.

It is found in the secreted. It localises to the membrane. Its pathway is cell wall biogenesis; peptidoglycan biosynthesis. Cell wall formation. The polypeptide is Putative transglycosylase H16_A0665 (Cupriavidus necator (strain ATCC 17699 / DSM 428 / KCTC 22496 / NCIMB 10442 / H16 / Stanier 337) (Ralstonia eutropha)).